The following is a 387-amino-acid chain: 8-amino-7-oxononanoate synthase (387 aa).

Arg19 is a binding site for substrate. Residue 106–107 coordinates pyridoxal 5'-phosphate; that stretch reads GY. His131 provides a ligand contact to substrate. Positions 177, 205, and 234 each coordinate pyridoxal 5'-phosphate. At Lys237 the chain carries N6-(pyridoxal phosphate)lysine. Residue Thr351 coordinates substrate.

Belongs to the class-II pyridoxal-phosphate-dependent aminotransferase family. BioF subfamily. As to quaternary structure, homodimer. Pyridoxal 5'-phosphate is required as a cofactor.

The catalysed reaction is 6-carboxyhexanoyl-[ACP] + L-alanine + H(+) = (8S)-8-amino-7-oxononanoate + holo-[ACP] + CO2. It functions in the pathway cofactor biosynthesis; biotin biosynthesis. Catalyzes the decarboxylative condensation of pimeloyl-[acyl-carrier protein] and L-alanine to produce 8-amino-7-oxononanoate (AON), [acyl-carrier protein], and carbon dioxide. The sequence is that of 8-amino-7-oxononanoate synthase from Methylococcus capsulatus (strain ATCC 33009 / NCIMB 11132 / Bath).